A 180-amino-acid chain; its full sequence is Large ribosomal subunit protein uL5 (180 aa).

The protein belongs to the universal ribosomal protein uL5 family. As to quaternary structure, part of the 50S ribosomal subunit; part of the 5S rRNA/L5/L18/L25 subcomplex. Contacts the 5S rRNA and the P site tRNA. Forms a bridge to the 30S subunit in the 70S ribosome.

This is one of the proteins that bind and probably mediate the attachment of the 5S RNA into the large ribosomal subunit, where it forms part of the central protuberance. In the 70S ribosome it contacts protein S13 of the 30S subunit (bridge B1b), connecting the 2 subunits; this bridge is implicated in subunit movement. Contacts the P site tRNA; the 5S rRNA and some of its associated proteins might help stabilize positioning of ribosome-bound tRNAs. The sequence is that of Large ribosomal subunit protein uL5 from Cupriavidus necator (strain ATCC 17699 / DSM 428 / KCTC 22496 / NCIMB 10442 / H16 / Stanier 337) (Ralstonia eutropha).